The primary structure comprises 305 residues: Fatty acid elongase 1 (305 aa).

7 helical membrane passes run Met24–Ile44, Val80–Val100, Phe129–Val149, Phe158–Gly178, Ile183–Ala203, Tyr217–Leu237, and Ile257–Tyr277. The HxxHH motif signature appears at His160–His164. His163 serves as the catalytic Nucleophile. A disordered region spans residues Pro284 to Lys305. Polar residues predominate over residues Gly288 to Ser299. The N-linked (GlcNAc...) asparagine glycan is linked to Asn297.

Belongs to the ELO family.

The protein resides in the endoplasmic reticulum membrane. It catalyses the reaction an acyl-CoA + malonyl-CoA + H(+) = a 3-oxoacyl-CoA + CO2 + CoA. It participates in lipid metabolism; fatty acid biosynthesis. Functionally, involved in the synthesis of fatty acids. Elongates C4 fatty acids to C10. This Trypanosoma brucei brucei (strain 927/4 GUTat10.1) protein is Fatty acid elongase 1.